A 286-amino-acid chain; its full sequence is 4-diphosphocytidyl-2-C-methyl-D-erythritol kinase (286 aa).

Lys11 is a catalytic residue. 93–103 is an ATP binding site; sequence PFGAGLGGGSS. Asp135 is an active-site residue.

Belongs to the GHMP kinase family. IspE subfamily.

It catalyses the reaction 4-CDP-2-C-methyl-D-erythritol + ATP = 4-CDP-2-C-methyl-D-erythritol 2-phosphate + ADP + H(+). The protein operates within isoprenoid biosynthesis; isopentenyl diphosphate biosynthesis via DXP pathway; isopentenyl diphosphate from 1-deoxy-D-xylulose 5-phosphate: step 3/6. Catalyzes the phosphorylation of the position 2 hydroxy group of 4-diphosphocytidyl-2C-methyl-D-erythritol. In Chlorobaculum tepidum (strain ATCC 49652 / DSM 12025 / NBRC 103806 / TLS) (Chlorobium tepidum), this protein is 4-diphosphocytidyl-2-C-methyl-D-erythritol kinase.